Here is an 821-residue protein sequence, read N- to C-terminus: High affinity potassium transporter (821 aa).

Over residues 1–10 (MSDSQSNKQN) the composition is skewed to polar residues. Positions 1–47 (MSDSQSNKQNQGEDDNNVSSSIESNENYPFRLNDEESEPQSSTTESM) are disordered. Residues 1-57 (MSDSQSNKQNQGEDDNNVSSSIESNENYPFRLNDEESEPQSSTTESMLKAKKQSWRQ) are Cytoplasmic-facing. The span at 17 to 27 (NVSSSIESNEN) shows a compositional bias: low complexity. Residues 58 to 78 (VLMLGFSSLGAIYGDIGTSPL) form a helical membrane-spanning segment. Topologically, residues 79–101 (YVLNSIKYPNSSPTEEDIYGAIS) are extracellular. The chain crosses the membrane as a helical span at residues 102–122 (IIFYLFTFIVIFKYILIVLFL). Residues 123-190 (GTNDGEGGQV…KASGFKTNPK (68 aa)) are Cytoplasmic-facing. The helical transmembrane segment at 191–211 (LIKFISKFILFGCFFGCSLVM) threads the bilayer. The Extracellular portion of the chain corresponds to 212 to 238 (SDGLLTPTTSVLSAIAGIQIANPSFND). The chain crosses the membrane as a helical span at residues 239–259 (VLAVSEVVLIVLFLIQQFGSN). A topological domain (cytoplasmic) is located at residue Lys260. Residues 261-281 (ISFTFAPIIFLWLIGLIISGI) traverse the membrane as a helical segment. At 282–306 (YNIVKFHPAVFKSLSPYYAIQLLKH) the chain is on the extracellular side. Residues 307-327 (SGIDVFSGAMLSITGTEAMFA) form a helical membrane-spanning segment. The Cytoplasmic segment spans residues 328–340 (DVGHFGRLPIQLT). Residues 341 to 361 (LTLFVYPALIICYLGQGAYII) form a helical membrane-spanning segment. The Extracellular portion of the chain corresponds to 362–386 (KHPEALSNPFFYSIPGGLNSWIYWV). The chain crosses the membrane as a helical span at residues 387–407 (MFVLATLSTIIASQALILGVF). The Cytoplasmic segment spans residues 408-434 (SITSQLINLDCFPNFKIIHVSKKYAGK). Residues 435 to 455 (VYIPAINWLLMIGVCATTAGF) form a helical membrane-spanning segment. Residues 456 to 463 (KNSNNVTA) are Extracellular-facing. A glycan (N-linked (GlcNAc...) asparagine) is linked at Asn460. Residues 464 to 484 (AYGLGITLDFLVTSSLIMVCM) traverse the membrane as a helical segment. The Cytoplasmic segment spans residues 485 to 491 (TYVYNWN). Residues 492–512 (ILIPITYALIFLPLEVIMVIS) form a helical membrane-spanning segment. Over 513–516 (NLKK) the chain is Extracellular. Residues 517–537 (ITHGAWFPLMMSGIFMMFLSF) traverse the membrane as a helical segment. The Cytoplasmic segment spans residues 538 to 821 (WRWARSRKVN…KMFLGGVVRI (284 aa)).

Belongs to the HAK/KUP transporter (TC 2.A.72) family.

It is found in the membrane. Functionally, major high-affinity potassium uptake protein. This chain is High affinity potassium transporter (HAK1), found in Schwanniomyces occidentalis (Yeast).